An 804-amino-acid polypeptide reads, in one-letter code: RasGAP-activating-like protein 1 (804 aa).

C2 domains lie at Met1 to Ile105 and Val116 to Phe231. 10 residues coordinate Ca(2+): Asp21, Asp27, Asp74, Asp76, Asp82, Asp149, Asp155, Asp202, Asp204, and Asp210. Residues Gly317–Leu545 form the Ras-GAP domain. In terms of domain architecture, PH spans Ala565–Ala672. A Btk-type zinc finger spans residues Asn674 to Ala710. Zn(2+)-binding residues include His682, Cys693, Cys694, and Cys704.

It depends on Ca(2+) as a cofactor. In terms of tissue distribution, highly expressed in thyroid and adrenal medulla, lower expression in brain, spinal cord and trachea. Expressed in melanocytes.

In terms of biological role, probable inhibitory regulator of the Ras-cyclic AMP pathway. Plays a role in dendrite formation by melanocytes. This is RasGAP-activating-like protein 1 from Homo sapiens (Human).